The chain runs to 106 residues: MSVARFSCGKTAQLSEKQTGYYSPEIFPSTGKDCNPQPANCLKDQYVLRHCCVDDRSGKMGYSVKFLVLTRMDTETASLFHCKPCYSKMTFTIYHPLTHSFFTSCW.

This is an uncharacterized protein from Escherichia coli O6:H1 (strain CFT073 / ATCC 700928 / UPEC).